The sequence spans 282 residues: tRNA uridine(34) hydroxylase (282 aa).

The Rhodanese domain maps to 128-222; it reads EGRPVVMLDT…YFEEVGGDHY (95 aa). The active-site Cysteine persulfide intermediate is Cys-182.

This sequence belongs to the TrhO family.

It catalyses the reaction uridine(34) in tRNA + AH2 + O2 = 5-hydroxyuridine(34) in tRNA + A + H2O. Functionally, catalyzes oxygen-dependent 5-hydroxyuridine (ho5U) modification at position 34 in tRNAs. This is tRNA uridine(34) hydroxylase from Cupriavidus pinatubonensis (strain JMP 134 / LMG 1197) (Cupriavidus necator (strain JMP 134)).